A 286-amino-acid chain; its full sequence is Probable ketoamine kinase YniA (286 aa).

An ATP-binding site is contributed by 91-93 (DYL). The active-site Proton acceptor is D193.

The protein belongs to the fructosamine kinase family.

Functionally, ketoamine kinase that phosphorylates ketoamines on the third carbon of the sugar moiety to generate ketoamine 3-phosphate. Its precise substrate are unknown: does not have ribulosamine and/or erythrulosamine 3-kinase activity in vitro. This Escherichia coli (strain K12) protein is Probable ketoamine kinase YniA (yniA).